Here is a 326-residue protein sequence, read N- to C-terminus: D-alanine--D-alanine ligase (326 aa).

Residues 112 to 312 enclose the ATP-grasp domain; it reads KRIWRFEGLP…YENLCLGILA (201 aa). 138 to 193 lines the ATP pocket; it reads LQALGAPMIVKPSREGSTIGLTKVWTAEECDQAYVLASRYDPEVLCEEFIEGDETT. Mg(2+)-binding residues include Asp265, Glu279, and Asn281.

It belongs to the D-alanine--D-alanine ligase family. The cofactor is Mg(2+). Mn(2+) serves as cofactor.

It localises to the cytoplasm. The enzyme catalyses 2 D-alanine + ATP = D-alanyl-D-alanine + ADP + phosphate + H(+). It functions in the pathway cell wall biogenesis; peptidoglycan biosynthesis. Functionally, cell wall formation. This Delftia acidovorans (strain DSM 14801 / SPH-1) protein is D-alanine--D-alanine ligase.